A 334-amino-acid chain; its full sequence is Glutamyl-tRNA reductase (334 aa).

Substrate-binding positions include 49 to 52, serine 107, 112 to 114, and glutamine 118; these read TCNR and EDQ. The active-site Nucleophile is cysteine 50. 186 to 191 provides a ligand contact to NADP(+); it reads GNGEMG.

It belongs to the glutamyl-tRNA reductase family. As to quaternary structure, homodimer.

It carries out the reaction (S)-4-amino-5-oxopentanoate + tRNA(Glu) + NADP(+) = L-glutamyl-tRNA(Glu) + NADPH + H(+). It participates in porphyrin-containing compound metabolism; protoporphyrin-IX biosynthesis; 5-aminolevulinate from L-glutamyl-tRNA(Glu): step 1/2. Functionally, catalyzes the NADPH-dependent reduction of glutamyl-tRNA(Glu) to glutamate 1-semialdehyde (GSA). In Alkaliphilus oremlandii (strain OhILAs) (Clostridium oremlandii (strain OhILAs)), this protein is Glutamyl-tRNA reductase.